Consider the following 419-residue polypeptide: Protein indeterminate-domain 14 (419 aa).

Residues 1–58 (MIDYERSNTTKNINTHHHNPPPSSSSSDLLPDGNGTAVTQKRKRRPAGTPDPEAEVVS) form a disordered region. 3 consecutive C2H2-type zinc fingers follow at residues 70–92 (YVCE…RRRH), 112–142 (YVCP…RRKH), and 148–175 (WICE…TRGH). Residues cysteine 150, cysteine 153, histidine 166, cysteine 170, cysteine 177, cysteine 179, histidine 192, and cysteine 196 each coordinate Zn(2+). The CCHC-type 2; atypical zinc-finger motif lies at 175–198 (HSCDCGRVFSRVESFIEHQDTCTV). Positions 185-197 (RVESFIEHQDTCT) are SHR-binding. Disordered stretches follow at residues 200–259 (RSQP…PSTL) and 298–318 (SEVE…EEAR). Composition is skewed to low complexity over residues 213–230 (QHTT…NNEN) and 246–259 (RRQS…PSTL). Residues 313-349 (EREEARRETKRQIEIAELEFAEAKRIRQHARAELHKA) are a coiled coil.

In terms of assembly, homo- and heterodimer of IDD14alpha and IDD14beta. In terms of tissue distribution, expressed in cotyledons and the vasculature of reosette leaves. Weak expression in hypocotyls and floral organs, but not detected in roots and inflorescence stems.

Its subcellular location is the nucleus. In terms of biological role, transcription factor regulating starch metabolism by binding directly to the promoter of QQS. The IDD14beta isoform attenuates the transcription factor activity by competitively forming heterodimers with reduced DNA-binding capacity. Regulates lateral organ morphogenesis and gravitropic responses. Has a redundant role with IDD16 in directing leaf and floral organ morphogenesis. Involved in the establishment of auxin gradients through the regulation of auxin biosynthesis and transport. This chain is Protein indeterminate-domain 14, found in Arabidopsis thaliana (Mouse-ear cress).